Here is a 1212-residue protein sequence, read N- to C-terminus: DNA-directed RNA polymerase subunit beta' (1212 aa).

Zn(2+) contacts are provided by cysteine 60, cysteine 62, cysteine 75, and cysteine 78. Mg(2+)-binding residues include aspartate 450, aspartate 452, and aspartate 454. Positions 819, 893, 900, and 903 each coordinate Zn(2+).

Belongs to the RNA polymerase beta' chain family. As to quaternary structure, the RNAP catalytic core consists of 2 alpha, 1 beta, 1 beta' and 1 omega subunit. When a sigma factor is associated with the core the holoenzyme is formed, which can initiate transcription. The cofactor is Mg(2+). It depends on Zn(2+) as a cofactor.

It catalyses the reaction RNA(n) + a ribonucleoside 5'-triphosphate = RNA(n+1) + diphosphate. In terms of biological role, DNA-dependent RNA polymerase catalyzes the transcription of DNA into RNA using the four ribonucleoside triphosphates as substrates. In Streptococcus thermophilus (strain ATCC BAA-491 / LMD-9), this protein is DNA-directed RNA polymerase subunit beta'.